The sequence spans 359 residues: Membrane-bound lytic murein transglycosylase C (359 aa).

Residues 1 to 16 form the signal peptide; that stretch reads MKKYLALALIAPLLIS. A lipid anchor (N-palmitoyl cysteine) is attached at C17. C17 carries the S-diacylglycerol cysteine lipid modification.

It belongs to the transglycosylase Slt family.

The protein resides in the cell outer membrane. It carries out the reaction Exolytic cleavage of the (1-&gt;4)-beta-glycosidic linkage between N-acetylmuramic acid (MurNAc) and N-acetylglucosamine (GlcNAc) residues in peptidoglycan, from either the reducing or the non-reducing ends of the peptidoglycan chains, with concomitant formation of a 1,6-anhydrobond in the MurNAc residue.. In terms of biological role, murein-degrading enzyme. May play a role in recycling of muropeptides during cell elongation and/or cell division. The protein is Membrane-bound lytic murein transglycosylase C of Escherichia coli O157:H7.